We begin with the raw amino-acid sequence, 676 residues long: Methionine--tRNA ligase (676 aa).

A 'HIGH' region motif is present at residues P11–H21. 4 residues coordinate Zn(2+): C143, C146, C156, and C159. A 'KMSKS' region motif is present at residues K326–S330. T329 is an ATP binding site. One can recognise a tRNA-binding domain in the interval E581–K676.

It belongs to the class-I aminoacyl-tRNA synthetase family. MetG type 1 subfamily. Homodimer. It depends on Zn(2+) as a cofactor.

It is found in the cytoplasm. It carries out the reaction tRNA(Met) + L-methionine + ATP = L-methionyl-tRNA(Met) + AMP + diphosphate. Is required not only for elongation of protein synthesis but also for the initiation of all mRNA translation through initiator tRNA(fMet) aminoacylation. In Methanosphaera stadtmanae (strain ATCC 43021 / DSM 3091 / JCM 11832 / MCB-3), this protein is Methionine--tRNA ligase.